A 188-amino-acid polypeptide reads, in one-letter code: MKVNANTMRKGHILEDGGKLYVITAANIVQPGKGGAFIQLEMKDVRTGTKTSMRFRTQETVERARLDEHEMSFLFAEGDQYTFMDKESFEQVTIPGDVIGDGKVFLQDGMEVVVQSFEGAPLSVELPQTVTLRIVEADPVVKGQTASSSYKPAVLENGVRVLVPPHVDAGTRIVVNVEDGTYLERAKD.

It belongs to the elongation factor P family.

Its subcellular location is the cytoplasm. The protein operates within protein biosynthesis; polypeptide chain elongation. In terms of biological role, involved in peptide bond synthesis. Stimulates efficient translation and peptide-bond synthesis on native or reconstituted 70S ribosomes in vitro. Probably functions indirectly by altering the affinity of the ribosome for aminoacyl-tRNA, thus increasing their reactivity as acceptors for peptidyl transferase. The sequence is that of Elongation factor P from Rhodospirillum centenum (strain ATCC 51521 / SW).